The sequence spans 235 residues: TVP38/TMEM64 family inner membrane protein YdjZ (235 aa).

Topologically, residues 1-13 (MMMMQSRKIWYYR) are periplasmic. Residues 14–34 (ITLIILLFAMLLAWALLPGVH) form a helical membrane-spanning segment. Residues 35-64 (EFINRSVAAFAAVDQQGIERFIQSYGALAA) are Cytoplasmic-facing. A helical transmembrane segment spans residues 65 to 85 (VVSFLLMILQAIAAPLPAFLI). Topologically, residues 86–95 (TFANASLFGA) are periplasmic. The segment at 90 to 199 (ASLFGAFWGG…IVYSWAGSML (110 aa)) is VTT domain. The helical transmembrane segment at 96–116 (FWGGLLSWTSSMAGAALCFFI) threads the bilayer. Over 117–176 (ARVMGREVVEKLTGKTVLDSMDGFFTRYGKHTILVCRLLPFVPFDPISYAAGLTSIRFRS) the chain is Cytoplasmic. Residues 177 to 197 (FFIATGLGQLPATIVYSWAGS) form a helical membrane-spanning segment. Residues 198–202 (MLTGG) lie on the Periplasmic side of the membrane. A helical transmembrane segment spans residues 203–223 (TFWFVTGLFILFALTVVIFMA). Residues 224–235 (KKIWLERQKRNA) lie on the Cytoplasmic side of the membrane.

This sequence belongs to the TVP38/TMEM64 family.

The protein localises to the cell inner membrane. The chain is TVP38/TMEM64 family inner membrane protein YdjZ (ydjZ) from Escherichia coli (strain K12).